The primary structure comprises 373 residues: MKKGTQRLSRLFAAMAIAGFASYSMAADTIKIALAGPVTGPVAQYGDMQRAGALMAIEQINKAGGVNGAQLEGVIYDDACDPKQAVAVANKVVNDGVKFVVGHVCSSSTQPATDIYEDEGVLMITPSATAPEITSRGYKLIFRTIGLDNMQGPVAGKFIAERYKDKTIAVLHDKQQYGEGIATEVKKTVEDAGIKVAVFEGLNAGDKDFNALISKLKKAGVQFVYFGGYHPEMGLLLRQAKQAGLDARFMGPEGVGNSEITAIAGDASEGMLATLPRAFEQDPKNKALIDAFKAKNQDPSGIFVLPAYSAVTVIAKGIEKAGEADPEKVAEALRANTFETPTGNLGFDEKGDLKNFDFTVYEWHKDATRTEVK.

The first 26 residues, 1–26 (MKKGTQRLSRLFAAMAIAGFASYSMA), serve as a signal peptide directing secretion. A disulfide bridge connects residues Cys80 and Cys105.

This sequence belongs to the leucine-binding protein family.

The protein localises to the periplasm. In terms of biological role, component of the high-affinity leucine, isoleucine, valine transport system I (LIV-I), which is operative without Na(+) and is specific for alanine and threonine, in addition to branched-chain amino acids. Binds L-leucine, L-isoleucine, L-valine, L-threonine and L-alanine with nanomolar affinities. Can also bind L-homoserine with high affinity. The chain is Leucine-, isoleucine-, valine-, threonine-, and alanine-binding protein (braC) from Pseudomonas aeruginosa (strain ATCC 15692 / DSM 22644 / CIP 104116 / JCM 14847 / LMG 12228 / 1C / PRS 101 / PAO1).